The sequence spans 323 residues: Aspartate carbamoyltransferase catalytic subunit (323 aa).

Carbamoyl phosphate contacts are provided by arginine 55 and threonine 56. Residue lysine 83 participates in L-aspartate binding. Residues arginine 105, histidine 138, and glutamine 141 each contribute to the carbamoyl phosphate site. L-aspartate contacts are provided by arginine 181 and arginine 235. Carbamoyl phosphate contacts are provided by glycine 276 and proline 277.

It belongs to the aspartate/ornithine carbamoyltransferase superfamily. ATCase family. In terms of assembly, heterododecamer (2C3:3R2) of six catalytic PyrB chains organized as two trimers (C3), and six regulatory PyrI chains organized as three dimers (R2).

The enzyme catalyses carbamoyl phosphate + L-aspartate = N-carbamoyl-L-aspartate + phosphate + H(+). It functions in the pathway pyrimidine metabolism; UMP biosynthesis via de novo pathway; (S)-dihydroorotate from bicarbonate: step 2/3. Functionally, catalyzes the condensation of carbamoyl phosphate and aspartate to form carbamoyl aspartate and inorganic phosphate, the committed step in the de novo pyrimidine nucleotide biosynthesis pathway. The polypeptide is Aspartate carbamoyltransferase catalytic subunit (Corynebacterium aurimucosum (strain ATCC 700975 / DSM 44827 / CIP 107346 / CN-1) (Corynebacterium nigricans)).